The primary structure comprises 507 residues: Subtilisin-like protease 1 (507 aa).

A signal peptide spans 1-19 (MGVFRFISISLAAVSAANA). Positions 20–116 (AQILSMPHAQ…VEPDTIISVN (97 aa)) are excised as a propeptide. Residues 34–113 (SYIVMMKDDT…VMFVEPDTII (80 aa)) enclose the Inhibitor I9 domain. The region spanning 126–400 (SWGLARISNS…NVLISNGGAK (275 aa)) is the Peptidase S8 domain. Residues aspartate 158 and histidine 190 each act as charge relay system in the active site. Residues 175–198 (GSNQVNDGDDRDGSGHGTHTSGTM) are disordered. An N-linked (GlcNAc...) asparagine glycan is attached at asparagine 251. The segment covering 282-294 (NENQDARSSSPAS) has biased composition (polar residues). The tract at residues 282 to 312 (NENQDARSSSPASEPSVCTVGSSAEDDSRSS) is disordered. Serine 345 (charge relay system) is an active-site residue. A compositionally biased stretch (polar residues) spans 378-394 (SSSITDVGPGTPTNVLI). Residues 378-486 (SSSITDVGPG…YPGGDNFDFD (109 aa)) are disordered. 2 stretches are compositionally biased toward pro residues: residues 405–428 (KPAP…PSQP) and 438–449 (EPFPGEPFPGEP). Positions 450-461 (FPGESSPGESAP) are enriched in low complexity. The span at 462–476 (APAPMPPSPQHPHTP) shows a compositional bias: pro residues.

It belongs to the peptidase S8 family.

Its subcellular location is the secreted. In terms of biological role, secreted subtilisin-like serine protease with keratinolytic activity that contributes to pathogenicity. The polypeptide is Subtilisin-like protease 1 (SUB1) (Trichophyton equinum (Horse ringworm fungus)).